Consider the following 220-residue polypeptide: Protein-methionine-sulfoxide reductase heme-binding subunit MsrQ (220 aa).

Transmembrane regions (helical) follow at residues 20–40 (LWLLYTAGFVPAVWTFYLGAT), 52–72 (EHLLGLWALRFLILTLLVTPI), 86–106 (ALGLLAFYYALMHFTTYMVLD), 122–142 (PFITIGMISLALLVPLALTSN), 153–173 (WSSLHKLVYIAIAGSAVHFLM), and 175–195 (VKSWPAEPVIYAAIVAALLLW).

It belongs to the MsrQ family. Heterodimer of a catalytic subunit (MsrP) and a heme-binding subunit (MsrQ). Requires FMN as cofactor. Heme b is required as a cofactor.

The protein resides in the cell inner membrane. Its function is as follows. Part of the MsrPQ system that repairs oxidized periplasmic proteins containing methionine sulfoxide residues (Met-O), using respiratory chain electrons. Thus protects these proteins from oxidative-stress damage caused by reactive species of oxygen and chlorine generated by the host defense mechanisms. MsrPQ is essential for the maintenance of envelope integrity under bleach stress, rescuing a wide series of structurally unrelated periplasmic proteins from methionine oxidation. MsrQ provides electrons for reduction to the reductase catalytic subunit MsrP, using the quinone pool of the respiratory chain. This is Protein-methionine-sulfoxide reductase heme-binding subunit MsrQ from Brucella abortus (strain S19).